A 232-amino-acid polypeptide reads, in one-letter code: Small ribosomal subunit protein uS3 (232 aa).

In terms of domain architecture, KH type-2 spans I39–R107. The segment at V212–K232 is disordered. Over residues Q213–K223 the composition is skewed to basic and acidic residues.

This sequence belongs to the universal ribosomal protein uS3 family. In terms of assembly, part of the 30S ribosomal subunit. Forms a tight complex with proteins S10 and S14.

In terms of biological role, binds the lower part of the 30S subunit head. Binds mRNA in the 70S ribosome, positioning it for translation. The chain is Small ribosomal subunit protein uS3 from Campylobacter curvus (strain 525.92).